The sequence spans 765 residues: Protein O-mannosyl-transferase 2 (765 aa).

The segment at 1-31 is disordered; it reads MAASVVKTPKCPRRGSVKDVAQNAPRTAPTS. The helical transmembrane segment at 35–55 threads the bilayer; that stretch reads ANWNWWLLLATVFLVTFATRF. Asn80, Asn106, and Asn119 each carry an N-linked (GlcNAc...) asparagine glycan. 5 helical membrane passes run 128–148, 175–195, 206–226, 228–248, and 268–288; these read YFCTTLGALIMPMGFDTVYDL, ILLDPILLFFMMASVWGMVKV, GLRWWLWLFLTGTMLSCTISV, FVGLFVVLLVGLHTATELWLI, and ITLIVWPVLLYILFFYIHLSV. Asn290 and Asn314 each carry an N-linked (GlcNAc...) asparagine glycan. MIR domains are found at residues 318-374, 384-440, and 445-501; these read PRDV…IRPH, VQIL…VLIV, and NETV…VEDN. Asn445 carries an N-linked (GlcNAc...) asparagine glycan. Helical transmembrane passes span 566 to 586, 667 to 687, 689 to 709, and 719 to 739; these read IYLLGNPLIWWSNLVFLALFV, LFLGWMLHYLPFWAMGRVLYF, HYFPALIFNSLLTGVMYNYIL, and VILGLVLSILVYSFAAFSPLA. Asn751 carries N-linked (GlcNAc...) asparagine glycosylation.

The protein belongs to the glycosyltransferase 39 family. As to quaternary structure, interacts with Rt/POMT1. In terms of tissue distribution, at the cellular blastoderm stage, expression accumulates in the ventrally located mesoderm primordium. At germ band extension, mesoderm expression is seen as stripes of strong expression. A very strong signal is also detected in the invaginating gut. As the germ band retracts, mesodermal expression decays and becomes restricted to somatic muscle precursors.

It is found in the endoplasmic reticulum membrane. It catalyses the reaction a di-trans,poly-cis-dolichyl beta-D-mannosyl phosphate + L-seryl-[protein] = 3-O-(alpha-D-mannosyl)-L-seryl-[protein] + a di-trans,poly-cis-dolichyl phosphate + H(+). It carries out the reaction a di-trans,poly-cis-dolichyl beta-D-mannosyl phosphate + L-threonyl-[protein] = 3-O-(alpha-D-mannosyl)-L-threonyl-[protein] + a di-trans,poly-cis-dolichyl phosphate + H(+). Its pathway is protein modification; protein glycosylation. Rt/POMT1 and tw/POMT2 function as a protein O-mannosyltransferase in association with each other to generate and maintain normal muscle development. The chain is Protein O-mannosyl-transferase 2 (tw) from Drosophila melanogaster (Fruit fly).